The primary structure comprises 648 residues: MDHQLTREESQRLMHLLKLPMEQYGNFPLMRKAFLRACKIVHPDKGGSDELSQELISLYRRLEESLPCLSTQDFIETDILQIPSYGTPEWDEWWKEFNKDFDLFCNEAFDRSDDEQEPQPDDSAPIILSPTYPARSQATPPKKKAKMDSPNDMPADLMEYLSCAILSNKTLPCFLIYTTLEKVELLYNKLSEEVLSPRFNQVDHKYGRKYVPIFIITGTKHRVSAVFNYCATYCSVSFIVVKGVIKEYPLYCHLCVEPYSVLQESIEELNSEFFDAPEDAAKNVNWVAISEYALKINCDDIYLLMGLYKEFQSPVPNCSKCENRMLTNHFKFHKEHHENAFYLQLVENQKTICQQAVDGVIATKTVDMAQMTRNEQLAARFDKLFERLEVILSAQSSYTISMFMAGIVWFENLFPGQSFKDLLLELLECMVSNIPKRRYWLFTGPVNTGKTTLAAAVLDLGGTIYISDCYLIELEVANSQIHGCVEVLAEKVKIRLPPGQGINNLDNLRDHLDGAVKVNLEKKHLNKKTQIFPPGIVTSNEYFIPFTLRVRFCKKLVFKFSKYQYLSLKKTECLGRYRILQNGCTLLLLLIYHCDLDDFAESIQGKVRAWKERVNSEISVSTYLEMRQCCLEGRYSVCTKYSNANTAQ.

Met1 bears the N-acetylmethionine; by host mark. In terms of domain architecture, J spans 12–75 (RLMHLLKLPM…LPCLSTQDFI (64 aa)). The LXCXE motif signature appears at 103–107 (LFCNE). A Phosphoserine; by host modification is found at Ser112. The tract at residues 112–149 (SDDEQEPQPDDSAPIILSPTYPARSQATPPKKKAKMDS) is disordered. Thr139 carries the phosphothreonine; by host modification. A Nuclear localization signal motif is present at residues 140-147 (PPKKKAKM). The T-ag OBD DNA-binding region spans 154-272 (PADLMEYLSC…QESIEELNSE (119 aa)). Residues 281–373 (AKNVNWVAIS…KTVDMAQMTR (93 aa)) form a T-ag D1-type zinc finger. Zn(2+)-binding residues include Cys318, Cys321, His329, and His333. Residues 418-573 (SFKDLLLELL…QYLSLKKTEC (156 aa)) enclose the SF3 helicase domain. 444 to 451 (GPVNTGKT) contributes to the ATP binding site.

As to quaternary structure, forms homohexamers in the presence of ATP. Interacts with host HDAC1. Interacts (via LXCXE domain) with host RB1; the interaction induces the aberrant dissociation of RB1-E2F1 complex thereby disrupting RB1's activity. Interacts (via LXCXE domain) with host pRB-related proteins RBL1 and RBL2. Interacts (via C-terminus) with host TOP1 and POLA1 allowing DNA replication. Interacts with host preinitiation complex components TBP, TFIIA and TFIID to regulate transcription initiation. The cofactor is Mg(2+). Post-translationally, phosphorylated on both serine and threonine residues. Small t antigen inhibits the dephosphorylation by the AC form of PP2A. O-Glycosylated near the C-terminal region. In terms of processing, acetylated by CBP in a TP53-dependent manner.

It localises to the host nucleus. It catalyses the reaction Couples ATP hydrolysis with the unwinding of duplex DNA by translocating in the 3'-5' direction.. It carries out the reaction ATP + H2O = ADP + phosphate + H(+). In terms of biological role, isoform large T antigen is a key early protein essential for both driving viral replication and inducing cellular transformation. Plays a role in viral genome replication by driving entry of quiescent cells into the cell cycle and by autoregulating the synthesis of viral early mRNA. Displays highly oncogenic activities by corrupting the host cellular checkpoint mechanisms that guard cell division and the transcription, replication, and repair of DNA. Participates in the modulation of cellular gene expression preceeding viral DNA replication. This step involves binding to host key cell cycle regulators retinoblastoma protein RB1/pRb and TP53. Induces the disassembly of host E2F1 transcription factors from RB1, thus promoting transcriptional activation of E2F1-regulated S-phase genes. Inhibits host TP53 binding to DNA, abrogating the ability of TP53 to stimulate gene expression. Plays the role of a TFIID-associated factor (TAF) in transcription initiation for all three RNA polymerases, by stabilizing the TBP-TFIIA complex on promoters. Initiates viral DNA replication and unwinding via interactions with the viral origin of replication. Binds two adjacent sites in the SV40 origin. The replication fork movement is facilitated by Large T antigen helicase activity. Has processive 3'-5' DNA helicase activity which requires a short 3' single-stranded region and ATP. Activates the transcription of viral late mRNA, through host TBP and TFIIA stabilization. Interferes with histone deacetylation mediated by HDAC1, leading to activation of transcription. This chain is Large T antigen, found in Murine polyomavirus (strain Kilham) (MPyV).